The following is a 269-amino-acid chain: Phosphonates import ATP-binding protein PhnC 2 (269 aa).

An ABC transporter domain is found at 2-246 (LRIDSLSKRY…VLNEIYGEED (245 aa)). 35–42 (GPSGAGKS) provides a ligand contact to ATP. The tract at residues 246–269 (DWNASGPAQDSEENEAVSAGVATH) is disordered.

This sequence belongs to the ABC transporter superfamily. Phosphonates importer (TC 3.A.1.9.1) family. As to quaternary structure, the complex is composed of two ATP-binding proteins (PhnC), two transmembrane proteins (PhnE) and a solute-binding protein (PhnD).

It is found in the cell inner membrane. It carries out the reaction phosphonate(out) + ATP + H2O = phosphonate(in) + ADP + phosphate + H(+). Functionally, part of the ABC transporter complex PhnCDE involved in phosphonates import. Responsible for energy coupling to the transport system. This is Phosphonates import ATP-binding protein PhnC 2 from Synechococcus sp. (strain JA-2-3B'a(2-13)) (Cyanobacteria bacterium Yellowstone B-Prime).